We begin with the raw amino-acid sequence, 386 residues long: Beta-citrylglutamate synthase B (386 aa).

In terms of domain architecture, ATP-grasp spans 119 to 304 (FQELAGHGVP…VAGIIADYAA (186 aa)). ATP contacts are provided by residues Lys-158, 193-203 (QKYVKESHGRD), and Arg-219. Residues Asp-264, Glu-277, and Asn-279 each coordinate Mg(2+). Mn(2+)-binding residues include Asp-264, Glu-277, and Asn-279. Positions 325-359 (ASETSEPELGPPASTAVDNMSASSSSVDSDPESTE) are disordered. Residues 338 to 352 (STAVDNMSASSSSVD) are compositionally biased toward low complexity.

Belongs to the RimK family. Mg(2+) is required as a cofactor. Requires Mn(2+) as cofactor.

Its subcellular location is the cytoplasm. It catalyses the reaction citrate + L-glutamate + ATP = beta-citrylglutamate + ADP + phosphate + H(+). The enzyme catalyses N-acetyl-L-aspartate + L-glutamate + ATP = N-acetyl-L-aspartyl-L-glutamate + ADP + phosphate + H(+). Functionally, catalyzes the synthesis of beta-citryl-L-glutamate and N-acetyl-L-aspartyl-L-glutamate. Beta-citryl-L-glutamate is synthesized more efficiently than N-acetyl-L-aspartyl-L-glutamate. This is Beta-citrylglutamate synthase B (RIMKLB) from Homo sapiens (Human).